We begin with the raw amino-acid sequence, 125 residues long: Small ribosomal subunit protein eS6 (125 aa).

Belongs to the eukaryotic ribosomal protein eS6 family.

This Pyrococcus abyssi (strain GE5 / Orsay) protein is Small ribosomal subunit protein eS6.